The sequence spans 842 residues: Histidine biosynthesis trifunctional protein (842 aa).

Residues 1 to 275 form a phosphoribosyl-AMP cyclohydrolase region; the sequence is MTFPLLPAYA…FVVEQTGVGF (275 aa). The segment at 276-357 is phosphoribosyl-ATP pyrophosphohydrolase; it reads CHLERTSCFG…FYFALVRCAK (82 aa). The segment at 358-842 is histidinol dehydrogenase; sequence YGVTLDEVER…KVRMEKLGLI (485 aa). The interval 380-403 is disordered; sequence KGDAKPGYTKEQPKEESKPKEVPS. The segment covering 390 to 403 has biased composition (basic and acidic residues); that stretch reads EQPKEESKPKEVPS. Positions 667 and 670 each coordinate Zn(2+). Active-site residues include E736 and H737. The Zn(2+) site is built by D769 and H828.

In the C-terminal section; belongs to the histidinol dehydrogenase family. Requires Zn(2+) as cofactor.

It carries out the reaction 1-(5-phospho-beta-D-ribosyl)-5'-AMP + H2O = 1-(5-phospho-beta-D-ribosyl)-5-[(5-phospho-beta-D-ribosylamino)methylideneamino]imidazole-4-carboxamide. It catalyses the reaction 1-(5-phospho-beta-D-ribosyl)-ATP + H2O = 1-(5-phospho-beta-D-ribosyl)-5'-AMP + diphosphate + H(+). The catalysed reaction is L-histidinol + 2 NAD(+) + H2O = L-histidine + 2 NADH + 3 H(+). It functions in the pathway amino-acid biosynthesis; L-histidine biosynthesis; L-histidine from 5-phospho-alpha-D-ribose 1-diphosphate: step 2/9. Its pathway is amino-acid biosynthesis; L-histidine biosynthesis; L-histidine from 5-phospho-alpha-D-ribose 1-diphosphate: step 3/9. It participates in amino-acid biosynthesis; L-histidine biosynthesis; L-histidine from 5-phospho-alpha-D-ribose 1-diphosphate: step 9/9. This chain is Histidine biosynthesis trifunctional protein (HIS4), found in Komagataella pastoris (Yeast).